The chain runs to 490 residues: Probable malate:quinone oxidoreductase (490 aa).

The protein belongs to the MQO family. The cofactor is FAD.

The catalysed reaction is (S)-malate + a quinone = a quinol + oxaloacetate. It participates in carbohydrate metabolism; tricarboxylic acid cycle; oxaloacetate from (S)-malate (quinone route): step 1/1. In Corynebacterium jeikeium (strain K411), this protein is Probable malate:quinone oxidoreductase.